The sequence spans 302 residues: MQRRELSGSAVALVTPFKKDLTVDEEALRRLVNFQIENGTDIIIPCGTTGESPTLTNEEQVQVIKIVCDEARGKAQVAAGAGTNSTIHAIELAKAAEAAGASAILSVAPYYNKPSQEGFYQHYKGIANAVSVPIIIYNVPGRTGSNIAVDTIIRLAEDLGNVLAVKEASGNMSQITEMLNRRPEKLAVLSGDDPLILPVMALGGDGIISVAANQVPKTVKDLVEAMFASDLTTAQKIHNQYYNLFTLNFIESNPVPVKYTLAKMGLIEEVYRLPLVPLSSSSKAKLDAELVQLGLVEASATA.

Thr49 is a pyruvate binding site. Tyr137 functions as the Proton donor/acceptor in the catalytic mechanism. The active-site Schiff-base intermediate with substrate is the Lys166. Ile208 is a pyruvate binding site.

This sequence belongs to the DapA family. In terms of assembly, homotetramer; dimer of dimers.

It localises to the cytoplasm. The catalysed reaction is L-aspartate 4-semialdehyde + pyruvate = (2S,4S)-4-hydroxy-2,3,4,5-tetrahydrodipicolinate + H2O + H(+). Its pathway is amino-acid biosynthesis; L-lysine biosynthesis via DAP pathway; (S)-tetrahydrodipicolinate from L-aspartate: step 3/4. Its function is as follows. Catalyzes the condensation of (S)-aspartate-beta-semialdehyde [(S)-ASA] and pyruvate to 4-hydroxy-tetrahydrodipicolinate (HTPA). This chain is 4-hydroxy-tetrahydrodipicolinate synthase, found in Chloroherpeton thalassium (strain ATCC 35110 / GB-78).